Here is a 278-residue protein sequence, read N- to C-terminus: HTH-type transcriptional activator RhaS (278 aa).

The HTH araC/xylS-type domain occupies Asn174–Gly272. 2 consecutive DNA-binding regions (H-T-H motif) follow at residues Glu191–Thr212 and Val239–Phe262.

Binds DNA as a dimer.

The protein resides in the cytoplasm. Activates expression of the rhaBAD and rhaT operons. The protein is HTH-type transcriptional activator RhaS of Salmonella paratyphi A (strain ATCC 9150 / SARB42).